Here is a 96-residue protein sequence, read N- to C-terminus: MEYANILLKPVISEKATMVKDAANQVVFFVHPAANKIEIAKAVEKAFSVTVKGVRVVKHKSLARSRMGRVTGRIPGYKKAYVTLAQGDKIEFFEGV.

The protein belongs to the universal ribosomal protein uL23 family. In terms of assembly, part of the 50S ribosomal subunit. Contacts protein L29, and trigger factor when it is bound to the ribosome.

In terms of biological role, one of the early assembly proteins it binds 23S rRNA. One of the proteins that surrounds the polypeptide exit tunnel on the outside of the ribosome. Forms the main docking site for trigger factor binding to the ribosome. The protein is Large ribosomal subunit protein uL23 of Solidesulfovibrio magneticus (strain ATCC 700980 / DSM 13731 / RS-1) (Desulfovibrio magneticus).